Reading from the N-terminus, the 247-residue chain is 5'-nucleotidase SurE (247 aa).

Residues aspartate 8, aspartate 9, serine 39, and asparagine 91 each contribute to the a divalent metal cation site.

Belongs to the SurE nucleotidase family. A divalent metal cation serves as cofactor.

Its subcellular location is the cytoplasm. It carries out the reaction a ribonucleoside 5'-phosphate + H2O = a ribonucleoside + phosphate. In terms of biological role, nucleotidase that shows phosphatase activity on nucleoside 5'-monophosphates. The sequence is that of 5'-nucleotidase SurE from Ruthia magnifica subsp. Calyptogena magnifica.